The sequence spans 124 residues: Putative peptidyl-tRNA hydrolase (124 aa).

The protein belongs to the PTH2 family.

The enzyme catalyses an N-acyl-L-alpha-aminoacyl-tRNA + H2O = an N-acyl-L-amino acid + a tRNA + H(+). In Fowlpox virus (strain NVSL) (FPV), this protein is Putative peptidyl-tRNA hydrolase.